The sequence spans 688 residues: Bifunctional protein GAL10 (688 aa).

The galactowaldenase stretch occupies residues 1-346 (MSEDKYCLVT…TQDNPFGYQI (346 aa)). NAD(+) is bound at residue 6–37 (YCLVTGGAGYIGSHTVVELCEAGYKCIVVDNL). The segment at 347-688 (KGVDSKFFGD…HKLSYTFRTL (342 aa)) is mutarotase. Residue histidine 525 is the For mutarotase activity of the active site.

It in the N-terminal section; belongs to the NAD(P)-dependent epimerase/dehydratase family. This sequence in the C-terminal section; belongs to the aldose epimerase family. NAD(+) is required as a cofactor.

The catalysed reaction is UDP-alpha-D-glucose = UDP-alpha-D-galactose. It catalyses the reaction alpha-D-glucose = beta-D-glucose. Its pathway is carbohydrate metabolism; galactose metabolism. It functions in the pathway carbohydrate metabolism; hexose metabolism. In terms of biological role, mutarotase converts alpha-aldose to the beta-anomer. It is active on D-glucose, L-arabinose, D-xylose, D-galactose, maltose and lactose. The chain is Bifunctional protein GAL10 (GAL10) from Kluyveromyces lactis (strain ATCC 8585 / CBS 2359 / DSM 70799 / NBRC 1267 / NRRL Y-1140 / WM37) (Yeast).